The chain runs to 233 residues: Small ribosomal subunit protein uS3 (233 aa).

In terms of domain architecture, KH type-2 spans valine 39–arginine 107.

This sequence belongs to the universal ribosomal protein uS3 family. As to quaternary structure, part of the 30S ribosomal subunit. Forms a tight complex with proteins S10 and S14.

In terms of biological role, binds the lower part of the 30S subunit head. Binds mRNA in the 70S ribosome, positioning it for translation. This chain is Small ribosomal subunit protein uS3, found in Edwardsiella ictaluri (strain 93-146).